The primary structure comprises 360 residues: Ribosomal RNA large subunit methyltransferase M (360 aa).

S-adenosyl-L-methionine is bound by residues S192, 225–228 (APGG), D244, D264, and D280. K309 functions as the Proton acceptor in the catalytic mechanism.

It belongs to the class I-like SAM-binding methyltransferase superfamily. RNA methyltransferase RlmE family. RlmM subfamily. Monomer.

Its subcellular location is the cytoplasm. It carries out the reaction cytidine(2498) in 23S rRNA + S-adenosyl-L-methionine = 2'-O-methylcytidine(2498) in 23S rRNA + S-adenosyl-L-homocysteine + H(+). Its function is as follows. Catalyzes the 2'-O-methylation at nucleotide C2498 in 23S rRNA. The protein is Ribosomal RNA large subunit methyltransferase M of Alkalilimnicola ehrlichii (strain ATCC BAA-1101 / DSM 17681 / MLHE-1).